Here is a 262-residue protein sequence, read N- to C-terminus: Cytochrome c oxidase subunit 3 (262 aa).

Helical transmembrane passes span 11–31, 32–52, 83–103, 125–147, 160–180, 198–218, and 240–260; these read LVEPSPWPLVGGSAAFTLTVG, LVMWFHYNSISLMILGLVMIV, GMVLFIVSEVFFFLAFFWAFF, LNAFAVPLLNTAVLLSSGVTVTW, AIQSLAITVMLGLYFTGLQAW, FFVATGFHGLHVIIGSTFLMV, and AWYWHFVDVVWLFLYVCIYWW.

Belongs to the cytochrome c oxidase subunit 3 family. In terms of assembly, component of the cytochrome c oxidase (complex IV, CIV), a multisubunit enzyme composed of a catalytic core of 3 subunits and several supernumerary subunits. The complex exists as a monomer or a dimer and forms supercomplexes (SCs) in the inner mitochondrial membrane with ubiquinol-cytochrome c oxidoreductase (cytochrome b-c1 complex, complex III, CIII).

The protein localises to the mitochondrion inner membrane. The enzyme catalyses 4 Fe(II)-[cytochrome c] + O2 + 8 H(+)(in) = 4 Fe(III)-[cytochrome c] + 2 H2O + 4 H(+)(out). Component of the cytochrome c oxidase, the last enzyme in the mitochondrial electron transport chain which drives oxidative phosphorylation. The respiratory chain contains 3 multisubunit complexes succinate dehydrogenase (complex II, CII), ubiquinol-cytochrome c oxidoreductase (cytochrome b-c1 complex, complex III, CIII) and cytochrome c oxidase (complex IV, CIV), that cooperate to transfer electrons derived from NADH and succinate to molecular oxygen, creating an electrochemical gradient over the inner membrane that drives transmembrane transport and the ATP synthase. Cytochrome c oxidase is the component of the respiratory chain that catalyzes the reduction of oxygen to water. Electrons originating from reduced cytochrome c in the intermembrane space (IMS) are transferred via the dinuclear copper A center (CU(A)) of subunit 2 and heme A of subunit 1 to the active site in subunit 1, a binuclear center (BNC) formed by heme A3 and copper B (CU(B)). The BNC reduces molecular oxygen to 2 water molecules using 4 electrons from cytochrome c in the IMS and 4 protons from the mitochondrial matrix. In Branchiostoma floridae (Florida lancelet), this protein is Cytochrome c oxidase subunit 3 (COIII).